Here is a 1603-residue protein sequence, read N- to C-terminus: DNA polymerase theta (1603 aa).

A Helicase ATP-binding domain is found at 38-208 (EARQFEDQHL…WLDGAKVFEA (171 aa)). Residue 51–58 (APTSAGKS) participates in ATP binding. The short motif at 149 to 152 (DEMH) is the DEAH box element. A Helicase C-terminal domain is found at 283-434 (TDSSLLEILK…GVLTRKRDAE (152 aa)).

This sequence belongs to the DNA polymerase type-A family.

It localises to the nucleus. It catalyses the reaction DNA(n) + a 2'-deoxyribonucleoside 5'-triphosphate = DNA(n+1) + diphosphate. In terms of biological role, DNA polymerase that promotes microhomology-mediated end-joining (MMEJ), an alternative non-homologous end-joining (NHEJ) machinery triggered in response to double-strand breaks in DNA. MMEJ is an error-prone repair pathway that produces deletions of sequences from the strand being repaired and promotes genomic rearrangements, such as telomere fusions. Required to prevent extensive loss of sequences near G-quadruplex (G4) DNA sites, which are prone to cause genome alterations, by generating deletions. The protein is DNA polymerase theta of Caenorhabditis elegans.